Consider the following 209-residue polypeptide: Large ribosomal subunit protein uL3 (209 aa).

Positions 118-152 (GFQGAIKRHGQSRGPMSHGSRYHRRPGSMGPVDPN) are disordered.

This sequence belongs to the universal ribosomal protein uL3 family. Part of the 50S ribosomal subunit. Forms a cluster with proteins L14 and L19.

One of the primary rRNA binding proteins, it binds directly near the 3'-end of the 23S rRNA, where it nucleates assembly of the 50S subunit. In Bacillus licheniformis (strain ATCC 14580 / DSM 13 / JCM 2505 / CCUG 7422 / NBRC 12200 / NCIMB 9375 / NCTC 10341 / NRRL NRS-1264 / Gibson 46), this protein is Large ribosomal subunit protein uL3.